Consider the following 393-residue polypeptide: ATP phosphoribosyltransferase regulatory subunit (393 aa).

This sequence belongs to the class-II aminoacyl-tRNA synthetase family. HisZ subfamily. Heteromultimer composed of HisG and HisZ subunits.

Its subcellular location is the cytoplasm. It functions in the pathway amino-acid biosynthesis; L-histidine biosynthesis; L-histidine from 5-phospho-alpha-D-ribose 1-diphosphate: step 1/9. Functionally, required for the first step of histidine biosynthesis. May allow the feedback regulation of ATP phosphoribosyltransferase activity by histidine. In Marinobacter nauticus (strain ATCC 700491 / DSM 11845 / VT8) (Marinobacter aquaeolei), this protein is ATP phosphoribosyltransferase regulatory subunit.